We begin with the raw amino-acid sequence, 463 residues long: Secretogranin-3 (463 aa).

The first 20 residues, 1 to 20, serve as a signal peptide directing secretion; it reads MGPKYVFITAIIGVFWHVQG. 3 disordered regions span residues 87 to 111, 225 to 267, and 353 to 398; these read VKRS…DSTK, DDDK…PEED, and EDKN…KGKA. Composition is skewed to basic and acidic residues over residues 102-111 and 229-262; these read GTLDDADSTK and QEGK…RNEL.

In terms of assembly, interacts with CHGA. Interacts with secretogranin II/SCG2. Interacts (via C-terminus) with CPE.

The protein resides in the cytoplasmic vesicle. It localises to the secretory vesicle. The protein localises to the secretory vesicle membrane. It is found in the secreted. Functionally, member of the granin protein family that regulates the biogenesis of secretory granules. Acts as a sorting receptor for intragranular proteins including chromogranin A/CHGA. May also play a role in angiogenesis. Promotes endothelial proliferation, migration and tube formation through MEK/ERK signaling pathway. In Xenopus tropicalis (Western clawed frog), this protein is Secretogranin-3 (scg3).